We begin with the raw amino-acid sequence, 411 residues long: Replication factor C subunit 2 (411 aa).

The interval 1-36 (MADFFNLKARQQAAAQASSSKTPTSKQESNRLQPWV) is disordered. Residues 11 to 27 (QQAAAQASSSKTPTSKQ) show a composition bias toward low complexity. Residues V36, R40, 73–81 (GPPGTGKTS), N195, and R253 each bind ATP.

This sequence belongs to the activator 1 small subunits family. Heteropentamer of subunits RFC1, RFC2, RFC3, RFC4 and RFC5 that forms a complex with PCNA in the presence of ATP.

The protein resides in the nucleus. In terms of biological role, the elongation of primed DNA templates by DNA polymerase delta and epsilon requires the action of the accessory proteins proliferating cell nuclear antigen (PCNA) and activator 1. Subunit 2 binds ATP and single-stranded DNA. This Phaeosphaeria nodorum (strain SN15 / ATCC MYA-4574 / FGSC 10173) (Glume blotch fungus) protein is Replication factor C subunit 2 (RFC2).